The chain runs to 235 residues: Sugar fermentation stimulation protein homolog (235 aa).

Belongs to the SfsA family.

The protein is Sugar fermentation stimulation protein homolog of Aliivibrio salmonicida (strain LFI1238) (Vibrio salmonicida (strain LFI1238)).